The chain runs to 136 residues: Class I hydrophobin A (136 aa).

A signal peptide spans 1–16; that stretch reads MRFALAITTLIAAVTA. Disulfide bonds link cysteine 39–cysteine 109, cysteine 47–cysteine 103, cysteine 48–cysteine 85, and cysteine 110–cysteine 128.

Belongs to the fungal hydrophobin family. Expressed in aerial conidia, in vitro blastospores, submerged conidia, and cells sporulating on chitin and insect cuticle, with hyd1 expression peaking in growing mycelia.

The protein localises to the secreted. Its subcellular location is the cell wall. It is found in the spore coat. The protein resides in the vacuole. It localises to the cytoplasmic vesicle. Aerial growth, conidiation, and dispersal of filamentous fungi in the environment rely upon a capability of their secreting small amphipathic proteins called hydrophobins (HPBs) with low sequence identity. Class I can self-assemble into an outermost layer of rodlet bundles on aerial cell surfaces, conferring cellular hydrophobicity that supports fungal growth, development and dispersal; whereas Class II form highly ordered films at water-air interfaces through intermolecular interactions but contribute nothing to the rodlet structure. Hyd1A contributes to certain cell wall-related features, such as hydrophobicity but is not involved in cell wall-related events during fungal proliferation in host hemocoel. Hyd1A and hyd1B coregulate the formation, morphology and orderly assembly of rodlet bundles required for conidial hydrophobicity and infectivity. Contributes to the spore coat rodlet layer. The polypeptide is Class I hydrophobin A (Beauveria bassiana (strain ARSEF 2860) (White muscardine disease fungus)).